The following is a 215-amino-acid chain: Reticulon-like protein B14 (215 aa).

The region spanning 31-211 (FADIMFWKNK…NKIPKAQAKT (181 aa)) is the Reticulon domain. Transmembrane regions (helical) follow at residues 41–61 (KESG…EVVE), 62–82 (YPFI…FLIW), and 141–161 (LWIL…YIVF).

It is found in the endoplasmic reticulum membrane. This Arabidopsis thaliana (Mouse-ear cress) protein is Reticulon-like protein B14 (RTNLB14).